The chain runs to 489 residues: Glutamyl-tRNA(Gln) amidotransferase subunit A (489 aa).

Residues Lys78 and Ser153 each act as charge relay system in the active site. Ser177 (acyl-ester intermediate) is an active-site residue.

This sequence belongs to the amidase family. GatA subfamily. As to quaternary structure, heterotrimer of A, B and C subunits.

It carries out the reaction L-glutamyl-tRNA(Gln) + L-glutamine + ATP + H2O = L-glutaminyl-tRNA(Gln) + L-glutamate + ADP + phosphate + H(+). Its function is as follows. Allows the formation of correctly charged Gln-tRNA(Gln) through the transamidation of misacylated Glu-tRNA(Gln) in organisms which lack glutaminyl-tRNA synthetase. The reaction takes place in the presence of glutamine and ATP through an activated gamma-phospho-Glu-tRNA(Gln). In Enterococcus faecalis (strain ATCC 700802 / V583), this protein is Glutamyl-tRNA(Gln) amidotransferase subunit A.